The chain runs to 115 residues: Non-specific lipid-transfer protein 4.1 (115 aa).

The N-terminal stretch at 1 to 25 (MARAAASQLVLVALVAAMLLVAADA) is a signal peptide. 4 cysteine pairs are disulfide-bonded: Cys29–Cys77, Cys39–Cys54, Cys55–Cys97, and Cys75–Cys111.

Belongs to the plant LTP family.

In terms of biological role, plant non-specific lipid-transfer proteins transfer phospholipids as well as galactolipids across membranes. May play a role in wax or cutin deposition in the cell walls of expanding epidermal cells and certain secretory tissues. The protein is Non-specific lipid-transfer protein 4.1 (LTP4.1) of Hordeum vulgare (Barley).